Consider the following 299-residue polypeptide: Arginase (299 aa).

Mn(2+) contacts are provided by His99, Asp122, His124, and Asp126. Residues 124-128 (HGDVN), 135-137 (SGN), and Asp178 each bind substrate. Mn(2+) is bound by residues Asp226 and Asp228. 2 residues coordinate substrate: Thr240 and Glu271.

The protein belongs to the arginase family. As to quaternary structure, homohexamer. The cofactor is Mn(2+).

It catalyses the reaction L-arginine + H2O = urea + L-ornithine. Its pathway is nitrogen metabolism; urea cycle; L-ornithine and urea from L-arginine: step 1/1. Its function is as follows. Controls arginine catabolism. This chain is Arginase (rocF), found in Bacillus caldovelox.